Here is a 154-residue protein sequence, read N- to C-terminus: Myoglobin (154 aa).

Residues 2–148 (GLSDGEWQLV…FRKDMASNYK (147 aa)) enclose the Globin domain. S4 carries the post-translational modification Phosphoserine. H65 is a nitrite binding site. H65 contributes to the O2 binding site. T68 bears the Phosphothreonine mark. Position 94 (H94) interacts with heme b.

Belongs to the globin family. As to quaternary structure, monomeric.

It localises to the cytoplasm. The protein resides in the sarcoplasm. The enzyme catalyses Fe(III)-heme b-[protein] + nitric oxide + H2O = Fe(II)-heme b-[protein] + nitrite + 2 H(+). It catalyses the reaction H2O2 + AH2 = A + 2 H2O. Monomeric heme protein which primary function is to store oxygen and facilitate its diffusion within muscle tissues. Reversibly binds oxygen through a pentacoordinated heme iron and enables its timely and efficient release as needed during periods of heightened demand. Depending on the oxidative conditions of tissues and cells, and in addition to its ability to bind oxygen, it also has a nitrite reductase activity whereby it regulates the production of bioactive nitric oxide. Under stress conditions, like hypoxia and anoxia, it also protects cells against reactive oxygen species thanks to its pseudoperoxidase activity. The chain is Myoglobin (MB) from Hylobates agilis (Agile gibbon).